A 416-amino-acid polypeptide reads, in one-letter code: Serine hydroxymethyltransferase (416 aa).

(6S)-5,6,7,8-tetrahydrofolate-binding positions include L121 and 125–127 (GHL). Position 230 is an N6-(pyridoxal phosphate)lysine (K230).

The protein belongs to the SHMT family. In terms of assembly, homodimer. Pyridoxal 5'-phosphate serves as cofactor.

Its subcellular location is the cytoplasm. The enzyme catalyses (6R)-5,10-methylene-5,6,7,8-tetrahydrofolate + glycine + H2O = (6S)-5,6,7,8-tetrahydrofolate + L-serine. The protein operates within one-carbon metabolism; tetrahydrofolate interconversion. Its pathway is amino-acid biosynthesis; glycine biosynthesis; glycine from L-serine: step 1/1. In terms of biological role, catalyzes the reversible interconversion of serine and glycine with tetrahydrofolate (THF) serving as the one-carbon carrier. This reaction serves as the major source of one-carbon groups required for the biosynthesis of purines, thymidylate, methionine, and other important biomolecules. Also exhibits THF-independent aldolase activity toward beta-hydroxyamino acids, producing glycine and aldehydes, via a retro-aldol mechanism. The protein is Serine hydroxymethyltransferase of Nitrosomonas europaea (strain ATCC 19718 / CIP 103999 / KCTC 2705 / NBRC 14298).